A 750-amino-acid chain; its full sequence is Probable methylmalonyl-CoA mutase large subunit (750 aa).

The (R)-methylmalonyl-CoA site is built by Tyr-91, Met-94, Thr-101, Arg-103, Tyr-105, and Ser-130. Cob(II)alamin contacts are provided by Phe-133 and Ala-155. The (R)-methylmalonyl-CoA site is built by Thr-211 and Gln-213. Positions 222 and 223 each coordinate cob(II)alamin. 4 residues coordinate (R)-methylmalonyl-CoA: Arg-223, His-260, Arg-299, and Ser-301. Positions 349, 386, 389, 628, 629, 630, 631, 674, 676, 705, and 728 each coordinate cob(II)alamin. The B12-binding domain occupies 616-748 (RPRILIAKMG…HRLAERLGYT (133 aa)).

The protein belongs to the methylmalonyl-CoA mutase family. Heterodimer of an alpha and a beta chain. Adenosylcob(III)alamin serves as cofactor.

The enzyme catalyses (R)-methylmalonyl-CoA = succinyl-CoA. Its pathway is metabolic intermediate metabolism; propanoyl-CoA degradation; succinyl-CoA from propanoyl-CoA: step 3/3. Catalyzes the isomerization of succinyl-CoA to methylmalonyl-CoA during synthesis of propionate from tricarboxylic acid-cycle intermediates. This chain is Probable methylmalonyl-CoA mutase large subunit (mutB), found in Mycobacterium bovis (strain ATCC BAA-935 / AF2122/97).